Consider the following 212-residue polypeptide: Transcriptional regulator GfcR (212 aa).

The protein belongs to the purine/pyrimidine phosphoribosyltransferase family. GfcR subfamily.

Functionally, DNA-binding transcriptional regulator that functions as a regulator of central sugar catabolic pathways. In Halobacterium salinarum (strain ATCC 29341 / DSM 671 / R1), this protein is Transcriptional regulator GfcR.